A 565-amino-acid polypeptide reads, in one-letter code: Sensor histidine kinase MtrB (565 aa).

Positions 1–13 (MMWGSRRRTRSRW) are enriched in basic residues. The disordered stretch occupies residues 1 to 21 (MMWGSRRRTRSRWGRSGPMTR). The next 2 helical transmembrane spans lie at 42–62 (VVALTLGLSLAVILALGFVLT) and 213–233 (GTMITGGAVLLVLLAGIALLV). In terms of domain architecture, HAMP spans 235–287 (RQVVVPVRSASRIAERFAEGHLSERMPVRGEDDMARLAMSFNDMAESLSRQIT). The Histidine kinase domain occupies 302 to 519 (DVSHELRTPL…CFRLTLPLVR (218 aa)). Histidine 305 is subject to Phosphohistidine; by autocatalysis. The tract at residues 524 to 565 (TTSPLPMKPIPQPSPSGGQSPSTGPQHAKDRARQREHAERSL) is disordered. Low complexity predominate over residues 538 to 549 (PSGGQSPSTGPQ). The span at 550-565 (HAKDRARQREHAERSL) shows a compositional bias: basic and acidic residues.

Its subcellular location is the cell membrane. It carries out the reaction ATP + protein L-histidine = ADP + protein N-phospho-L-histidine.. Its function is as follows. Member of the two-component regulatory system MtrA/MtrB. Seems to function as a membrane-associated protein kinase that phosphorylates MtrA in response to environmental signals. This Mycolicibacterium paratuberculosis (strain ATCC BAA-968 / K-10) (Mycobacterium paratuberculosis) protein is Sensor histidine kinase MtrB (mtrB).